Here is a 505-residue protein sequence, read N- to C-terminus: One cut domain family member 2 (505 aa).

3 disordered regions span residues 29–94 (LGTL…GTAA), 165–190 (KFHHPHPHHHPHHHHHHHHHHQRLSG), and 275–333 (EQHL…QLEE). The span at 35-56 (PVGGGSGGGGGGGGGGGGGGPG) shows a compositional bias: gly residues. Over residues 167-187 (HHPHPHHHPHHHHHHHHHHQR) the composition is skewed to basic residues. Positions 325–411 (VATSGQLEEI…QRMSALRLAA (87 aa)) form a DNA-binding region, CUT. Residues 427-486 (QKKSRLVFTDLQRRTLFAIFKENKRPSKEMQITISQQLGLELTTVSNFFMNARRRSLEKW) constitute a DNA-binding region (homeobox).

Belongs to the CUT homeobox family.

It localises to the nucleus. Transcriptional activator. Activates the transcription of a number of liver genes such as HNF3B. This Mus musculus (Mouse) protein is One cut domain family member 2 (Onecut2).